A 476-amino-acid polypeptide reads, in one-letter code: Aspartyl/glutamyl-tRNA(Asn/Gln) amidotransferase subunit B (476 aa).

This sequence belongs to the GatB/GatE family. GatB subfamily. Heterotrimer of A, B and C subunits.

The catalysed reaction is L-glutamyl-tRNA(Gln) + L-glutamine + ATP + H2O = L-glutaminyl-tRNA(Gln) + L-glutamate + ADP + phosphate + H(+). The enzyme catalyses L-aspartyl-tRNA(Asn) + L-glutamine + ATP + H2O = L-asparaginyl-tRNA(Asn) + L-glutamate + ADP + phosphate + 2 H(+). Its function is as follows. Allows the formation of correctly charged Asn-tRNA(Asn) or Gln-tRNA(Gln) through the transamidation of misacylated Asp-tRNA(Asn) or Glu-tRNA(Gln) in organisms which lack either or both of asparaginyl-tRNA or glutaminyl-tRNA synthetases. The reaction takes place in the presence of glutamine and ATP through an activated phospho-Asp-tRNA(Asn) or phospho-Glu-tRNA(Gln). In Neisseria gonorrhoeae (strain ATCC 700825 / FA 1090), this protein is Aspartyl/glutamyl-tRNA(Asn/Gln) amidotransferase subunit B.